The following is a 782-amino-acid chain: E3 UFM1-protein ligase 1 homolog (782 aa).

Positions 404 to 477 are disordered; it reads NASTQELEDD…GSRGGGGVNK (74 aa). Residues 443 to 453 are compositionally biased toward basic residues; sequence KSTKKHQRGKA.

This sequence belongs to the UFL1 family.

Its function is as follows. E3 UFM1-protein ligase that mediates ufmylation of target proteins. The chain is E3 UFM1-protein ligase 1 homolog from Drosophila erecta (Fruit fly).